An 891-amino-acid chain; its full sequence is Alanine--tRNA ligase (891 aa).

H564, H568, C677, and H681 together coordinate Zn(2+).

This sequence belongs to the class-II aminoacyl-tRNA synthetase family. Zn(2+) serves as cofactor.

Its subcellular location is the cytoplasm. The enzyme catalyses tRNA(Ala) + L-alanine + ATP = L-alanyl-tRNA(Ala) + AMP + diphosphate. Its function is as follows. Catalyzes the attachment of alanine to tRNA(Ala) in a two-step reaction: alanine is first activated by ATP to form Ala-AMP and then transferred to the acceptor end of tRNA(Ala). Also edits incorrectly charged Ser-tRNA(Ala) and Gly-tRNA(Ala) via its editing domain. The chain is Alanine--tRNA ligase from Bradyrhizobium sp. (strain ORS 278).